The chain runs to 124 residues: Aspartate 1-decarboxylase (124 aa).

The active-site Schiff-base intermediate with substrate; via pyruvic acid is S21. The residue at position 21 (S21) is a Pyruvic acid (Ser). Residue T53 coordinates substrate. The active-site Proton donor is the Y54. 69-71 (GAA) provides a ligand contact to substrate.

It belongs to the PanD family. As to quaternary structure, heterooctamer of four alpha and four beta subunits. It depends on pyruvate as a cofactor. Is synthesized initially as an inactive proenzyme, which is activated by self-cleavage at a specific serine bond to produce a beta-subunit with a hydroxyl group at its C-terminus and an alpha-subunit with a pyruvoyl group at its N-terminus.

It is found in the cytoplasm. The catalysed reaction is L-aspartate + H(+) = beta-alanine + CO2. It functions in the pathway cofactor biosynthesis; (R)-pantothenate biosynthesis; beta-alanine from L-aspartate: step 1/1. Catalyzes the pyruvoyl-dependent decarboxylation of aspartate to produce beta-alanine. The chain is Aspartate 1-decarboxylase from Dehalococcoides mccartyi (strain CBDB1).